A 225-amino-acid chain; its full sequence is Peptidyl-prolyl cis-trans isomerase D (225 aa).

Positions 1-22 (MKLQFFSFITLFACLFTTAIFA) are cleaved as a signal peptide. One can recognise a PPIase cyclophilin-type domain in the interval 37-195 (YFDINHGDKQ…KEVIIVESGE (159 aa)). An N-linked (GlcNAc...) asparagine glycan is attached at Asn-139. The Prevents secretion from ER motif lies at 222–225 (HDEL).

It belongs to the cyclophilin-type PPIase family. PPIase B subfamily.

The protein localises to the endoplasmic reticulum lumen. The catalysed reaction is [protein]-peptidylproline (omega=180) = [protein]-peptidylproline (omega=0). Its function is as follows. PPIases accelerate the folding of proteins. It catalyzes the cis-trans isomerization of proline imidic peptide bonds in oligopeptides. The sequence is that of Peptidyl-prolyl cis-trans isomerase D from Saccharomyces cerevisiae (strain ATCC 204508 / S288c) (Baker's yeast).